The following is an 809-amino-acid chain: Spindle pole body component alp14 (809 aa).

HEAT repeat units follow at residues D127–A164 and I167–D204. Disordered regions lie at residues P233–Q274, A507–L608, and E619–H638. Polar residues predominate over residues F239–T253. The segment covering E262 to Q274 has biased composition (acidic residues). Positions A509 to P518 are enriched in basic residues. Composition is skewed to low complexity over residues V526–K551 and S582–Q595. Residues S543 and S548 each carry the phosphoserine modification. Residues V597–L608 show a composition bias toward polar residues. The stretch at E637–S697 forms a coiled coil. Phosphoserine occurs at positions 697 and 720.

It belongs to the TOG/XMAP215 family. In terms of assembly, interacts with alp14.

Its subcellular location is the cytoplasm. The protein resides in the cytoskeleton. It localises to the microtubule organizing center. It is found in the spindle pole body. The protein localises to the chromosome. Its subcellular location is the centromere. The protein resides in the kinetochore. Its function is as follows. Required for bipolar spindle formation and proper chromosome segregation. Has a role in connecting the kinetochores and the plus end of pole to chromosome microtubules. Also required for the activation of the spindle checkpoint pathway. This is Spindle pole body component alp14 (alp14) from Schizosaccharomyces pombe (strain 972 / ATCC 24843) (Fission yeast).